A 355-amino-acid polypeptide reads, in one-letter code: Protein RecA (355 aa).

67–74 (GPESSGKT) is an ATP binding site.

This sequence belongs to the RecA family.

It is found in the cytoplasm. Can catalyze the hydrolysis of ATP in the presence of single-stranded DNA, the ATP-dependent uptake of single-stranded DNA by duplex DNA, and the ATP-dependent hybridization of homologous single-stranded DNAs. It interacts with LexA causing its activation and leading to its autocatalytic cleavage. The sequence is that of Protein RecA from Shewanella halifaxensis (strain HAW-EB4).